The following is a 460-amino-acid chain: Argininosuccinate lyase (460 aa).

Belongs to the lyase 1 family. Argininosuccinate lyase subfamily.

It is found in the cytoplasm. The catalysed reaction is 2-(N(omega)-L-arginino)succinate = fumarate + L-arginine. The protein operates within amino-acid biosynthesis; L-arginine biosynthesis; L-arginine from L-ornithine and carbamoyl phosphate: step 3/3. This is Argininosuccinate lyase from Alkaliphilus metalliredigens (strain QYMF).